A 538-amino-acid polypeptide reads, in one-letter code: Cytochrome P450 monooxygenase claO (538 aa).

The next 2 helical transmembrane spans lie at 7–27 (IGAF…KLVG) and 222–242 (INPS…PILL). C475 lines the heme pocket.

Belongs to the cytochrome P450 family. Heme serves as cofactor.

The protein resides in the membrane. It participates in secondary metabolite biosynthesis; terpenoid biosynthesis. Cytochrome P450 monooxygenase; part of the gene cluster that mediates the biosynthesis of clavilactone A, a meroterpenoid that features a unique benzo-fused ten-membered carbocyclic ring unit with an alpha,beta-epoxy-gamma-lactone moiety, forming an intriguing 10/5/3 tricyclic nested skeleton. Cytochrome P450 monooxygenases claO, claP, claQ, claU, and claW are close orthologs, suggesting that a redundant function or pseudogenes are present in the cla cluster. These monoxygenases are not involved in clavilactone A biosynthesis nor in its modification. ClaR, ClaS and ClaT are sufficient to produce clavilactone A. The biosynthesis begins with the prenyltransferase claS that transfers geranyl pyrophosphate (GPP) to hydroquinone to produces geranylhydroquinone. The cytochrome P450 monooxygenase claR then catalyzes the diradical coupling reaction between the intramolecular hydroquinone and allyl moieties to form the benzo-fused ten-membered carbocyclic ring unit of wigantol. Finally the cytochrome P450 monooxygenase claT exquisitely and stereoselectively assembles the alpha,beta-epoxy-gamma-lactone moiety, producing clavilactone A via arnebinol A. This Ampulloclitocybe clavipes (Club foot) protein is Cytochrome P450 monooxygenase claO.